Consider the following 1132-residue polypeptide: Protein CROWDED NUCLEI 1 (1132 aa).

The interval 1–31 is disordered; the sequence is MSTPLKVWQRWSTPTKATNPDSNGSSHGTGL. Positions 10-28 are enriched in polar residues; that stretch reads RWSTPTKATNPDSNGSSHG. Residues 73-714 adopt a coiled-coil conformation; the sequence is LLIEKKEWSS…KKLKEQREQF (642 aa). 2 consecutive short sequence motifs (nuclear localization signal) follow at residues 379–386 and 693–700; these read EKREAEWK and IRKDVDDL. Phosphoserine occurs at positions 774 and 803. Residues 849-859 are compositionally biased toward basic and acidic residues; it reads AESETGTKEVE. Disordered stretches follow at residues 849-871, 883-909, 924-1039, and 1061-1132; these read AESE…DQSD, SLSN…TRSV, INLY…VQQE, and GVST…FLTT. The span at 861-871 shows a compositional bias: polar residues; sequence TNVNSDGDQSD. A phosphoserine mark is found at Ser-865 and Ser-883. A compositionally biased stretch (basic residues) spans 895 to 907; sequence MKGKGKARTRRTR. Ser-908 carries the phosphoserine modification. A phosphoserine mark is found at Ser-1093, Ser-1105, and Ser-1112. The segment covering 1095–1105 has biased composition (basic and acidic residues); sequence DVNKTPLRADS.

Belongs to the CRWN family. As to quaternary structure, core component of the LINC complex which is composed of inner nuclear membrane SUN domain-containing proteins coupled to outer nuclear membrane WIP and WIT proteins. The LINC complex also involves nucleoskeletal proteins CRWN/LINC and possibly KAKU4 and the cytoskeletal myosin KAKU1. Interacts with SUN1 and SUN2. Binds to KAKU4. As to expression, expressed at low levels in roots, leaves, flowers and flower stalks.

The protein resides in the nucleus membrane. It localises to the nucleus. Its subcellular location is the nucleoplasm. It is found in the nucleus lamina. In terms of biological role, component of SUN-protein-containing multivariate complexes also called LINC complexes which link the nucleoskeleton and cytoskeleton by providing versatile outer nuclear membrane attachment sites for cytoskeletal filaments. Required for nucleus structure organization (e.g. size and shape). This Arabidopsis thaliana (Mouse-ear cress) protein is Protein CROWDED NUCLEI 1.